A 282-amino-acid polypeptide reads, in one-letter code: Undecaprenyl-diphosphatase (282 aa).

The next 6 helical transmembrane spans lie at 51-71 (TLVA…AAVI), 87-107 (MGWM…LFET), 115-135 (SLYW…LAEG), 191-211 (ATAA…AGLY), 229-249 (NILV…AFLL), and 259-279 (IFIA…ATGV).

It belongs to the UppP family.

Its subcellular location is the cell inner membrane. It catalyses the reaction di-trans,octa-cis-undecaprenyl diphosphate + H2O = di-trans,octa-cis-undecaprenyl phosphate + phosphate + H(+). Its function is as follows. Catalyzes the dephosphorylation of undecaprenyl diphosphate (UPP). Confers resistance to bacitracin. The sequence is that of Undecaprenyl-diphosphatase from Pelodictyon phaeoclathratiforme (strain DSM 5477 / BU-1).